The chain runs to 405 residues: Replication factor C large subunit (405 aa).

47–54 is an ATP binding site; that stretch reads GPPGVGKT.

Belongs to the activator 1 small subunits family. RfcL subfamily. Heteromultimer composed of small subunits (RfcS) and large subunits (RfcL).

In terms of biological role, part of the RFC clamp loader complex which loads the PCNA sliding clamp onto DNA. This Saccharolobus islandicus (strain Y.N.15.51 / Yellowstone #2) (Sulfolobus islandicus) protein is Replication factor C large subunit.